Here is a 365-residue protein sequence, read N- to C-terminus: tRNA-specific 2-thiouridylase MnmA (365 aa).

ATP-binding positions include 14–21 and leucine 40; that span reads AMSGGVDS. Catalysis depends on cysteine 108, which acts as the Nucleophile. Cysteine 108 and cysteine 204 are disulfide-bonded. Glycine 132 provides a ligand contact to ATP. Residues 154-156 form an interaction with tRNA region; sequence KDQ. The active-site Cysteine persulfide intermediate is the cysteine 204.

Belongs to the MnmA/TRMU family.

The protein resides in the cytoplasm. The catalysed reaction is S-sulfanyl-L-cysteinyl-[protein] + uridine(34) in tRNA + AH2 + ATP = 2-thiouridine(34) in tRNA + L-cysteinyl-[protein] + A + AMP + diphosphate + H(+). Catalyzes the 2-thiolation of uridine at the wobble position (U34) of tRNA, leading to the formation of s(2)U34. The protein is tRNA-specific 2-thiouridylase MnmA of Rickettsia africae (strain ESF-5).